A 329-amino-acid polypeptide reads, in one-letter code: Chlorophyllase-1, chloroplastic (329 aa).

A chloroplast-targeting transit peptide spans 1–21; it reads MAAMVDSKPAASVQGTPLLAT. Residues 145-149 carry the GXSXG motif; sequence GHSRG. Residue serine 147 is the Nucleophile of the active site. Active-site charge relay system residues include aspartate 169 and histidine 242.

This sequence belongs to the AB hydrolase superfamily. Lipase family.

It localises to the plastid. Its subcellular location is the chloroplast. The enzyme catalyses a chlorophyll + H2O = a chlorophyllide + phytol + H(+). Its pathway is porphyrin-containing compound metabolism; chlorophyll degradation. In terms of biological role, catalyzes the hydrolysis of ester bond in chlorophyll to yield chlorophyllide and phytol. The sequence is that of Chlorophyllase-1, chloroplastic from Citrus unshiu (Satsuma mandarin).